The chain runs to 521 residues: Melanopsin (521 aa).

Over 1 to 71 (MDSPSGPRVL…VDVPDHAHYT (71 aa)) the chain is Extracellular. N-linked (GlcNAc...) asparagine glycosylation is found at Asn30 and Asn34. Residues 72-92 (LGTVILLVGLTGMLGNLTVIY) traverse the membrane as a helical segment. Topologically, residues 93–106 (TFCRNRGLRTPANM) are cytoplasmic. Residues 107–127 (FIINLAVSDFLMSVTQAPVFF) traverse the membrane as a helical segment. Residues 128–143 (ASSLYKKWLFGETGCE) are Extracellular-facing. Cys142 and Cys220 are joined by a disulfide. The chain crosses the membrane as a helical span at residues 144-164 (FYAFCGAVFGITSMITLTAIA). The Cytoplasmic segment spans residues 165 to 187 (MDRYLVITRPLATIGRGSKRRTA). The chain crosses the membrane as a helical span at residues 188–208 (LVLLGVWLYALAWSLPPFFGW). Residues 209-237 (SAYVPEGLLTSCSWDYMTFTPQVRAYTML) lie on the Extracellular side of the membrane. The chain crosses the membrane as a helical span at residues 238–258 (LFCFVFFLPLLIIIFCYIFIF). At 259 to 293 (RAIRETGRACEGCGESPLRQRRQWQRLQSEWKMAK) the chain is on the cytoplasmic side. A helical transmembrane segment spans residues 294 to 314 (VALIVILLFVLSWAPYSTVAL). At 315–329 (VAFAGYSHILTPYMS) the chain is on the extracellular side. The helical transmembrane segment at 330 to 350 (SVPAVIAKASAIHNPIIYAIT) threads the bilayer. Residue Lys337 is modified to N6-(retinylidene)lysine. The Cytoplasmic segment spans residues 351–521 (HPKYRVAIAQ…LEDDVTLRHL (171 aa)). Residues 445-486 (GELKASSSPQVQRSKTPKVPGPSTCRPMKGQGARPSSLRGDQ) form a disordered region. Residues 449 to 458 (ASSSPQVQRS) are compositionally biased toward polar residues.

Belongs to the G-protein coupled receptor 1 family. Opsin subfamily. Expressed in the retinal pigment epithelium and ganglion cell layer (at protein level). Also expressed in amacrine cell layers of the retina. Weakly expressed in vibrissae, and tail. In terms of tissue distribution, observed with processes in the outer strata of inner plexiform layer (IPL) close to the inner nuclear layer (INL) or is found to be bistratified with processes located both in the inner (ON) or outer (OFF) layers of the IPL (at protein level). A second population of isoform 1 is identified in processes which are confined to the inner layer of the IPL near to the ganglion cell layer (GCL) (at protein level). As to expression, about 40 times more abundant than isoform 1 in the retina (at protein level). Isoform 2 is involved in processes localized to the outer IPL or is bistratified with processes in both the inner and outer layers of the IPL (at protein level). Isoform 2 is absent in the processes confined only to the inner layer of the IPL (at protein level).

It localises to the cell membrane. It is found in the cell projection. The protein localises to the axon. The protein resides in the dendrite. Its subcellular location is the perikaryon. In terms of biological role, photoreceptor that binds cis-retinaldehydes. Contributes to pupillar reflex, photoentrainment and other non-image forming responses to light. May be involved in the optokinetic visual tracking response. May be involved in the regulation of retinal hyaloid vessel growth and regression. The chain is Melanopsin (Opn4) from Mus musculus (Mouse).